The following is a 354-amino-acid chain: Guanine nucleotide-binding protein G(o) subunit alpha (354 aa).

The N-myristoyl glycine moiety is linked to residue G2. A lipid anchor (S-palmitoyl cysteine) is attached at C3. One can recognise a G-alpha domain in the interval 32-354 (KDVKLLLLGA…ANNLRGCGLY (323 aa)). Positions 35-48 (KLLLLGAGESGKST) are G1 motif. Residues E43, K46, S47, T48, S152, L176, R177, T178, and R179 each coordinate GTP. S47 contributes to the Mg(2+) binding site. A G2 motif region spans residues 174-182 (DILRTRVKT). Position 182 (T182) interacts with Mg(2+). The interval 197 to 206 (FRLFDVGGQR) is G3 motif. Q205 bears the 5-glutamyl histamine mark. A G4 motif region spans residues 266 to 273 (ILFLNKKD). The GTP site is built by N270, D273, and C325. A G5 motif region spans residues 324–329 (TCATDT). Residue C351 is the site of S-palmitoyl cysteine attachment.

Belongs to the G-alpha family. G(i/o/t/z) subfamily. G proteins are composed of 3 units; alpha, beta and gamma. The alpha chain contains the guanine nucleotide binding site. Forms a complex with GNB1 and GNG3. Interacts with RGS14. Interacts with RGS16. Interacts with RGS19. Interacts (when palmitoylated) with ADGRG3. Histaminylated at Gln-205 residues by TGM2.

The protein localises to the cell membrane. Its subcellular location is the membrane. It catalyses the reaction GTP + H2O = GDP + phosphate + H(+). The GTPase activity is promoted by GTPAse activators, such as RGS14, RGS16 and RGS19. Functionally, guanine nucleotide-binding proteins (G proteins) function as transducers downstream of G protein-coupled receptors (GPCRs) in numerous signaling cascades. The alpha chain contains the guanine nucleotide binding site and alternates between an active, GTP-bound state and an inactive, GDP-bound state. Signaling by an activated GPCR promotes GDP release and GTP binding. The alpha subunit has a low GTPase activity that converts bound GTP to GDP, thereby terminating the signal. Both GDP release and GTP hydrolysis are modulated by numerous regulatory proteins. Signaling is mediated via effector proteins, such as adenylate cyclase. Inhibits adenylate cyclase activity, leading to decreased intracellular cAMP levels. The sequence is that of Guanine nucleotide-binding protein G(o) subunit alpha (Gnao1) from Mus musculus (Mouse).